The following is a 193-amino-acid chain: 21 kDa protein (193 aa).

An N-terminal signal peptide occupies residues 1–22 (MKLSKSTLVFSALLVILAAASA).

The polypeptide is 21 kDa protein (Daucus carota (Wild carrot)).